Consider the following 255-residue polypeptide: Aprataxin and PNK-like factor (255 aa).

The segment covering 1 to 11 has biased composition (low complexity); that stretch reads MSATDASTADS. 3 disordered regions span residues 1–117, 131–168, and 195–255; these read MSAT…VSSS, RRNP…FGNA, and RLRQ…DDYD. Basic and acidic residues-rich tracts occupy residues 12–22, 40–64, and 137–150; these read GAKRKSSEDIT, KSEE…KAEP, and RSAE…DYRR. 2 PBZ-type zinc fingers span residues 121 to 142 and 161 to 182; these read TSCR…AEAH and PACP…DYSH. Residues 207–218 show a composition bias toward acidic residues; it reads DDSGTDEEDEPF. Over residues 221-230 the composition is skewed to basic and acidic residues; the sequence is DNDRDADYRP. Residues 234–244 are compositionally biased toward acidic residues; sequence INEDEDDELEF.

The protein belongs to the APLF family.

In terms of biological role, displays apurinic-apyrimidinic (AP) endonuclease and 3'-5' exonuclease activities in vitro. This is Aprataxin and PNK-like factor from Drosophila melanogaster (Fruit fly).